The following is a 137-amino-acid chain: Ribosome-binding factor A (137 aa).

Belongs to the RbfA family. As to quaternary structure, monomer. Binds 30S ribosomal subunits, but not 50S ribosomal subunits or 70S ribosomes.

It is found in the cytoplasm. One of several proteins that assist in the late maturation steps of the functional core of the 30S ribosomal subunit. Associates with free 30S ribosomal subunits (but not with 30S subunits that are part of 70S ribosomes or polysomes). Required for efficient processing of 16S rRNA. May interact with the 5'-terminal helix region of 16S rRNA. This is Ribosome-binding factor A from Allorhizobium ampelinum (strain ATCC BAA-846 / DSM 112012 / S4) (Agrobacterium vitis (strain S4)).